Here is a 129-residue protein sequence, read N- to C-terminus: uncharacterized protein (129 aa).

Positions 23–101 (KASTSSESCQ…TAATRTTSKK (79 aa)) are disordered. Composition is skewed to basic and acidic residues over residues 31–40 (CQRRGVRDDT) and 67–80 (EGDR…EKEP).

This is an uncharacterized protein from Ictaluridae (bullhead catfishes).